The following is a 313-amino-acid chain: tRNA pseudouridine synthase B (313 aa).

D42 (nucleophile) is an active-site residue.

Belongs to the pseudouridine synthase TruB family. Type 1 subfamily.

It carries out the reaction uridine(55) in tRNA = pseudouridine(55) in tRNA. Its function is as follows. Responsible for synthesis of pseudouridine from uracil-55 in the psi GC loop of transfer RNAs. The sequence is that of tRNA pseudouridine synthase B from Prochlorococcus marinus (strain SARG / CCMP1375 / SS120).